A 161-amino-acid polypeptide reads, in one-letter code: Large ribosomal subunit protein eL21 (161 aa).

This sequence belongs to the eukaryotic ribosomal protein eL21 family.

This chain is Large ribosomal subunit protein eL21 (rpl-21), found in Caenorhabditis elegans.